Consider the following 346-residue polypeptide: Probable dual-specificity RNA methyltransferase RlmN (346 aa).

Glu-90 acts as the Proton acceptor in catalysis. Residues 96–330 (TRDRLTVCVS…VSVRASRGLD (235 aa)) form the Radical SAM core domain. Cysteines 103 and 335 form a disulfide. 3 residues coordinate [4Fe-4S] cluster: Cys-110, Cys-114, and Cys-117. Residues 157–158 (GE), Ser-187, 216–218 (SLH), and Asn-292 contribute to the S-adenosyl-L-methionine site. Cys-335 serves as the catalytic S-methylcysteine intermediate.

The protein belongs to the radical SAM superfamily. RlmN family. Requires [4Fe-4S] cluster as cofactor.

Its subcellular location is the cytoplasm. It carries out the reaction adenosine(2503) in 23S rRNA + 2 reduced [2Fe-2S]-[ferredoxin] + 2 S-adenosyl-L-methionine = 2-methyladenosine(2503) in 23S rRNA + 5'-deoxyadenosine + L-methionine + 2 oxidized [2Fe-2S]-[ferredoxin] + S-adenosyl-L-homocysteine. The enzyme catalyses adenosine(37) in tRNA + 2 reduced [2Fe-2S]-[ferredoxin] + 2 S-adenosyl-L-methionine = 2-methyladenosine(37) in tRNA + 5'-deoxyadenosine + L-methionine + 2 oxidized [2Fe-2S]-[ferredoxin] + S-adenosyl-L-homocysteine. Specifically methylates position 2 of adenine 2503 in 23S rRNA and position 2 of adenine 37 in tRNAs. The chain is Probable dual-specificity RNA methyltransferase RlmN from Synechococcus sp. (strain RCC307).